The chain runs to 528 residues: DEAD-box ATP-dependent RNA helicase 6 (528 aa).

Low complexity-rich tracts occupy residues 1-15 (MNNNNNNRGRFPPGI) and 65-80 (QQYVQRGYPQQIQQQQ). The segment at 1–80 (MNNNNNNRGR…GYPQQIQQQQ (80 aa)) is disordered. A Q motif motif is present at residues 154–182 (NEFEDYFLKRDLLRGIYEKGFEKPSPIQE). One can recognise a Helicase ATP-binding domain in the interval 185 to 355 (IPIALTGSDI…DRYLKKPYII (171 aa)). Position 198–205 (198–205 (AKNGTGKT)) interacts with ATP. Position 260 is a phosphothreonine (Thr-260). A DEAD box motif is present at residues 303 to 306 (DEAD). In terms of domain architecture, Helicase C-terminal spans 365–525 (GVTQYYAFVE…PIPSLIDKAI (161 aa)).

The protein belongs to the DEAD box helicase family. DDX6/DHH1 subfamily.

Its subcellular location is the cytoplasm. The protein localises to the P-body. The enzyme catalyses ATP + H2O = ADP + phosphate + H(+). In terms of biological role, ATP-dependent RNA helicase involved in mRNA turnover, and more specifically in mRNA decapping. The chain is DEAD-box ATP-dependent RNA helicase 6 (RH6) from Arabidopsis thaliana (Mouse-ear cress).